We begin with the raw amino-acid sequence, 891 residues long: DNA polymerase I (891 aa).

Positions 1–313 constitute a 5'-3' exonuclease domain; it reads MEQPVIKEGT…LLDNTPALDN (313 aa). The region spanning 314 to 488 is the 3'-5' exonuclease domain; sequence TPKKSCMIVL…RLCEYFEKGG (175 aa). The tract at residues 492–890 is polymerase; it reads NLLSLAREIE…FIAKRWNELK (399 aa).

It belongs to the DNA polymerase type-A family. As to quaternary structure, single-chain monomer with multiple functions.

The enzyme catalyses DNA(n) + a 2'-deoxyribonucleoside 5'-triphosphate = DNA(n+1) + diphosphate. Functionally, in addition to polymerase activity, this DNA polymerase exhibits 3'-5' and 5'-3' exonuclease activity. In Helicobacter pylori (strain ATCC 700392 / 26695) (Campylobacter pylori), this protein is DNA polymerase I (polA).